Here is a 147-residue protein sequence, read N- to C-terminus: D-aminoacyl-tRNA deacylase (147 aa).

Residues 136–137 carry the Gly-cisPro motif, important for rejection of L-amino acids motif; the sequence is GP.

This sequence belongs to the DTD family. As to quaternary structure, homodimer.

The protein resides in the cytoplasm. The enzyme catalyses glycyl-tRNA(Ala) + H2O = tRNA(Ala) + glycine + H(+). It carries out the reaction a D-aminoacyl-tRNA + H2O = a tRNA + a D-alpha-amino acid + H(+). Functionally, an aminoacyl-tRNA editing enzyme that deacylates mischarged D-aminoacyl-tRNAs. Also deacylates mischarged glycyl-tRNA(Ala), protecting cells against glycine mischarging by AlaRS. Acts via tRNA-based rather than protein-based catalysis; rejects L-amino acids rather than detecting D-amino acids in the active site. By recycling D-aminoacyl-tRNA to D-amino acids and free tRNA molecules, this enzyme counteracts the toxicity associated with the formation of D-aminoacyl-tRNA entities in vivo and helps enforce protein L-homochirality. The chain is D-aminoacyl-tRNA deacylase from Streptococcus suis (strain 98HAH33).